Reading from the N-terminus, the 1249-residue chain is Nuclear envelope pore membrane protein POM 121 (1249 aa).

Positions 1-10 are enriched in low complexity; sequence MSPAAAAAGA. Positions 1–27 are disordered; the sequence is MSPAAAAAGAGERRRPIASVRDGRGRG. Positions 1–34 are cisternal side; that stretch reads MSPAAAAAGAGERRRPIASVRDGRGRGCGGPARA. A required for targeting to the nucleus and nuclear pore complex region spans residues 1-285; sequence MSPAAAAAGA…APPDRRFSRS (285 aa). A compositionally biased stretch (basic and acidic residues) spans 11–25; it reads GERRRPIASVRDGRG. Residues 35–55 traverse the membrane as a helical segment; that stretch reads VLLGLSLVGLLLYLVPAAAAL. A pore side region spans residues 56 to 1249; it reads AWLTVGATAA…QARRQHTRKK (1194 aa). Ser-94 carries the phosphoserine modification. Disordered regions lie at residues 136-220, 319-530, 602-776, 959-986, and 1226-1249; these read LMGS…CGTL, KEKK…LGYS, KKMQ…PVFS, PLPS…AKPA, and IGAG…TRKK. A compositionally biased stretch (pro residues) spans 168 to 190; the sequence is ARPAPRSPPPRSPPPRSPPPSPP. Phosphoserine is present on residues Ser-345, Ser-351, Ser-371, Ser-393, and Ser-396. The segment covering 405 to 423 has biased composition (polar residues); the sequence is IPSSSRNAITSSYSSTRGI. Residues 432–445 show a composition bias toward low complexity; the sequence is PSSSPFSSPASSRS. 2 stretches are compositionally biased toward basic and acidic residues: residues 450–462 and 472–486; these read RPAK…ELCH and ADRE…DTTP. Residues 491 to 502 are compositionally biased toward polar residues; the sequence is NSNSQSTPGSSG. Low complexity predominate over residues 635 to 652; it reads PPLGLSQSGPPGLLPSPS. Residues 683 to 696 are compositionally biased toward polar residues; it reads QAETATKPQATSAP. 2 stretches are compositionally biased toward low complexity: residues 712–726 and 749–770; these read SPSS…SAPP and SVTA…TAPT. A compositionally biased stretch (basic residues) spans 1239 to 1249; that stretch reads LQARRQHTRKK.

This sequence belongs to the POM121 family.

The protein resides in the nucleus. The protein localises to the nuclear pore complex. It localises to the nucleus membrane. It is found in the endoplasmic reticulum membrane. Functionally, essential component of the nuclear pore complex (NPC). The repeat-containing domain may be involved in anchoring components of the pore complex to the pore membrane. When overexpressed in cells induces the formation of cytoplasmic annulate lamellae (AL). The sequence is that of Nuclear envelope pore membrane protein POM 121 (POM121) from Homo sapiens (Human).